The sequence spans 247 residues: Adiponectin (247 aa).

The first 17 residues, 1–17 (MLLLQALLFLLILPSHA), serve as a signal peptide directing secretion. 2 O-linked (GalNAc...) threonine glycosylation sites follow: threonine 23 and threonine 24. Lysine 36 is modified (5-hydroxylysine). Cysteine 39 carries the S-(2-succinyl)cysteine modification. The tract at residues 44–105 (AGIPGHPGHN…GFPGTPGRKG (62 aa)) is disordered. The Collagen-like domain maps to 45–110 (GIPGHPGHNG…PGRKGEPGEA (66 aa)). A 4-hydroxyproline mark is found at proline 47, proline 50, and proline 56. A compositionally biased stretch (basic and acidic residues) spans 58–73 (RDGRDGTPGEKGEKGD). Lysine 68, lysine 71, and lysine 80 each carry 5-hydroxylysine; alternate. O-linked (Gal...) hydroxylysine; alternate glycosylation is found at lysine 68, lysine 71, and lysine 80. Proline 94 carries the 4-hydroxyproline modification. Residue lysine 104 is modified to 5-hydroxylysine; alternate. Lysine 104 carries an O-linked (Gal...) hydroxylysine; alternate glycan. A C1q domain is found at 111–247 (AYVYRSAFSV…TGFLLYHDTN (137 aa)).

In terms of assembly, homomultimer. Forms trimers, hexamers and 12- to 18-mers. The trimers (low molecular weight complexes / LMW) are assembled via non-covalent interactions of the collagen-like domains in a triple helix and hydrophobic interactions within the globular C1q domain. Several trimers can associate to form disulfide-linked hexamers (middle molecular weight complexes / MMW) and larger complexes (higher molecular weight / HMW). The HMW-complex assembly is also modulated by the degree of lysine hydroxylation and glycosylation. LMW, MMW and HMW complexes bind to HBEGF, MMW and HMW complexes bind to PDGFB, and HMW complex binds to FGF2. Interacts with CTRP9 via the C1q domain (heterotrimeric complex). HMW complexes are more extensively glycosylated than smaller oligomers. Hydroxylation and glycosylation of the lysine residues within the collagen-like domain of adiponectin seem to be critically involved in regulating the formation and/or secretion of HMW complexes and consequently contribute to the insulin-sensitizing activity of adiponectin in hepatocytes. In terms of processing, O-glycosylated. Not N-glycosylated O-linked glycans on hydroxylysine residues consist of Glc-Gal disaccharides bound to the oxygen atom of post-translationally added hydroxyl groups. O-linked glycosylation in the N-terminal is disialylated with the structure Neu5Acalpha2-&gt;8Neu5Acalpha2-&gt;3Gal. Sialylated by alpha 2,8-sialyltransferase III. Post-translationally, succination of Cys-39 by the Krebs cycle intermediate fumarate, which leads to S-(2-succinyl)cysteine residues, inhibits polymerization and secretion of adiponectin. Adiponectin is a major target for succination in both adipocytes and adipose tissue of diabetic mice. It was proposed that succination of proteins is a biomarker of mitochondrial stress and accumulation of Krebs cycle intermediates in adipose tissue in diabetes and that succination of adiponectin may contribute to the decrease in plasma adiponectin in diabetes. Synthesized exclusively by adipocytes and secreted into plasma.

It localises to the secreted. Polymerization and secretion of adiponectin is inhibited by succination of cysteine residues by the Krebs cycle intermediate fumarate, which leads to S-(2-succinyl)cysteine residues. Its function is as follows. Important adipokine involved in the control of fat metabolism and insulin sensitivity, with direct anti-diabetic, anti-atherogenic and anti-inflammatory activities. Stimulates AMPK phosphorylation and activation in the liver and the skeletal muscle, enhancing glucose utilization and fatty-acid combustion. Antagonizes TNF-alpha by negatively regulating its expression in various tissues such as liver and macrophages, and also by counteracting its effects. Inhibits endothelial NF-kappa-B signaling through a cAMP-dependent pathway. May play a role in cell growth, angiogenesis and tissue remodeling by binding and sequestering various growth factors with distinct binding affinities, depending on the type of complex, LMW, MMW or HMW. This chain is Adiponectin (Adipoq), found in Mus musculus (Mouse).